We begin with the raw amino-acid sequence, 369 residues long: Endo-1,4-beta-xylanase A (369 aa).

Residues 1–20 (MRKLTQFCLGLMLLPIAAVA) form the signal peptide. The 347-residue stretch at 21–367 (QNQPTMKDVL…KPVVKEIIKL (347 aa)) folds into the GH10 domain. The active-site Proton donor is the glutamate 156. Catalysis depends on glutamate 261, which acts as the Nucleophile.

Belongs to the glycosyl hydrolase 10 (cellulase F) family.

It carries out the reaction Endohydrolysis of (1-&gt;4)-beta-D-xylosidic linkages in xylans.. It functions in the pathway glycan degradation; xylan degradation. The chain is Endo-1,4-beta-xylanase A (xynA) from Xylanibacter ruminicola (Prevotella ruminicola).